Consider the following 105-residue polypeptide: Pyrimidine/purine nucleoside phosphorylase (105 aa).

It belongs to the nucleoside phosphorylase PpnP family.

The enzyme catalyses a purine D-ribonucleoside + phosphate = a purine nucleobase + alpha-D-ribose 1-phosphate. It catalyses the reaction adenosine + phosphate = alpha-D-ribose 1-phosphate + adenine. It carries out the reaction cytidine + phosphate = cytosine + alpha-D-ribose 1-phosphate. The catalysed reaction is guanosine + phosphate = alpha-D-ribose 1-phosphate + guanine. The enzyme catalyses inosine + phosphate = alpha-D-ribose 1-phosphate + hypoxanthine. It catalyses the reaction thymidine + phosphate = 2-deoxy-alpha-D-ribose 1-phosphate + thymine. It carries out the reaction uridine + phosphate = alpha-D-ribose 1-phosphate + uracil. The catalysed reaction is xanthosine + phosphate = alpha-D-ribose 1-phosphate + xanthine. Its function is as follows. Catalyzes the phosphorolysis of diverse nucleosides, yielding D-ribose 1-phosphate and the respective free bases. Can use uridine, adenosine, guanosine, cytidine, thymidine, inosine and xanthosine as substrates. Also catalyzes the reverse reactions. The protein is Pyrimidine/purine nucleoside phosphorylase of Ralstonia pickettii (strain 12J).